The primary structure comprises 900 residues: Bifunctional uridylyltransferase/uridylyl-removing enzyme (900 aa).

The tract at residues 1 to 342 (MPQVDPELFD…PCEQPVQIQP (342 aa)) is uridylyltransferase. The segment at 343–705 (LNSRFQLRDG…TTQREFESGS (363 aa)) is uridylyl-removing. One can recognise an HD domain in the interval 461 to 583 (VDAHTLNLIK…VGDQTHLDYL (123 aa)). 2 ACT domains span residues 706 to 789 (QIFI…IIQR) and 816 to 891 (VLEV…DNGR).

It belongs to the GlnD family. It depends on Mg(2+) as a cofactor.

It carries out the reaction [protein-PII]-L-tyrosine + UTP = [protein-PII]-uridylyl-L-tyrosine + diphosphate. It catalyses the reaction [protein-PII]-uridylyl-L-tyrosine + H2O = [protein-PII]-L-tyrosine + UMP + H(+). Uridylyltransferase (UTase) activity is inhibited by glutamine, while glutamine activates uridylyl-removing (UR) activity. In terms of biological role, modifies, by uridylylation and deuridylylation, the PII regulatory proteins (GlnB and homologs), in response to the nitrogen status of the cell that GlnD senses through the glutamine level. Under low glutamine levels, catalyzes the conversion of the PII proteins and UTP to PII-UMP and PPi, while under higher glutamine levels, GlnD hydrolyzes PII-UMP to PII and UMP (deuridylylation). Thus, controls uridylylation state and activity of the PII proteins, and plays an important role in the regulation of nitrogen assimilation and metabolism. The polypeptide is Bifunctional uridylyltransferase/uridylyl-removing enzyme (Pseudomonas aeruginosa (strain LESB58)).